A 90-amino-acid chain; its full sequence is Small ribosomal subunit protein bS16 (90 aa).

This sequence belongs to the bacterial ribosomal protein bS16 family.

This is Small ribosomal subunit protein bS16 from Lactococcus lactis subsp. cremoris (strain SK11).